The following is a 2172-amino-acid chain: DExH-box ATP-dependent RNA helicase DExH13 (2172 aa).

The interval 20-83 (YKVNSSLVLN…KSKKKKERCD (64 aa)) is disordered. The span at 30-73 (SDERRRDTHESSGEPESLRGRIDPKSFGDRVVRGRPHELDERLN) shows a compositional bias: basic and acidic residues. One can recognise a Helicase ATP-binding 1 domain in the interval 515–698 (GTALFKADNI…FLRVDLKNGL (184 aa)). Position 528-535 (528-535 (APTGAGKT)) interacts with ATP. Residues 640–643 (DEIH) carry the DEIH box motif. The region spanning 742 to 946 (GKHQVLIFVH…NAREACHWLG (205 aa)) is the Helicase C-terminal 1 domain. One can recognise an SEC63 1 domain in the interval 1007–1308 (TDLGRIASYY…KWLDSPTVLP (302 aa)). Residues 1361-1538 (TVLYNTSDNV…WIGASSCGVF (178 aa)) enclose the Helicase ATP-binding 2 domain. 1374–1381 (APTGSGKT) provides a ligand contact to ATP. The DELH box signature appears at 1480 to 1483 (DELH). Residues 1575-1772 (AIVQHAKNKK…NFNAEVVARV (198 aa)) form the Helicase C-terminal 2 domain. The region spanning 1840–2157 (PLNLGMIASY…YLGCDQEYSF (318 aa)) is the SEC63 2 domain.

It localises to the nucleus. The catalysed reaction is ATP + H2O = ADP + phosphate + H(+). In terms of biological role, RNA helicase that plays an essential role in pre-mRNA splicing as component of the U5 snRNP and U4/U6-U5 tri-snRNP complexes. Involved in spliceosome assembly, activation and disassembly. The sequence is that of DExH-box ATP-dependent RNA helicase DExH13 from Arabidopsis thaliana (Mouse-ear cress).